The sequence spans 339 residues: DNA-directed RNA polymerase subunit alpha (339 aa).

An alpha N-terminal domain (alpha-NTD) region spans residues 1–233 (MVREEVAGST…DLFLPFLHAE (233 aa)). Positions 266-339 (GIPLNCIFID…IDLLKNKLSF (74 aa)) are alpha C-terminal domain (alpha-CTD).

It belongs to the RNA polymerase alpha chain family. As to quaternary structure, in plastids the minimal PEP RNA polymerase catalytic core is composed of four subunits: alpha, beta, beta', and beta''. When a (nuclear-encoded) sigma factor is associated with the core the holoenzyme is formed, which can initiate transcription.

The protein resides in the plastid. It is found in the chloroplast. The catalysed reaction is RNA(n) + a ribonucleoside 5'-triphosphate = RNA(n+1) + diphosphate. DNA-dependent RNA polymerase catalyzes the transcription of DNA into RNA using the four ribonucleoside triphosphates as substrates. The protein is DNA-directed RNA polymerase subunit alpha of Elymus canadensis (Canada wild rye).